We begin with the raw amino-acid sequence, 644 residues long: Core protein VP4 (644 aa).

The protein belongs to the orbivirus VP4 family.

It localises to the virion. The VP4 protein is one of the five proteins (with VP1, VP3, VP6 and VP7) which form the inner capsid of the virus. The polypeptide is Core protein VP4 (Segment-4) (Bluetongue virus 11 (isolate USA) (BTV 11)).